The following is a 711-amino-acid chain: T-box transcription factor TBX2 (711 aa).

A DNA-binding region (T-box) is located at residues 109–287 (LEAKELWDQF…NNPFAKGFRD (179 aa)). Residues 313–449 (PERDGAESDA…GEGKEPSLAP (137 aa)) form a disordered region. The span at 326–340 (DPPPAREPPPSPSAA) shows a compositional bias: pro residues. 3 positions are modified to phosphoserine: S336, S342, and S360. Basic and acidic residues-rich tracts occupy residues 363 to 372 (EPERTGEERS), 390 to 409 (TEPE…KEPT), and 421 to 444 (SLEK…EGKE). Positions 518–602 (GSGSSGGAGP…ATSAAAAAAA (85 aa)) are repression domain 1 (RD1). Phosphoserine is present on residues S623, S652, S656, and S675. The disordered stretch occupies residues 640–687 (TGLAAEGSKGGNSREPSPLPELALRKVGGPSRGALSPSGSAKEAASEL).

As to quaternary structure, binds DNA as a monomer. Interacts with CHD4, HDAC1 and HDAC2, perhaps as components of a NuRD-like complex. Interacts with CBX3, HMGB2 and PBX1. Interacts with PML. Post-translationally, phosphorylated. May be phosphorylated by p38 MAPK in response to UV irradiation stress. In terms of tissue distribution, in adults, highest levels in lung. Also found in heart, kidney, and ovary.

It is found in the nucleus. Functionally, transcription factor which acts as a transcriptional repressor. May also function as a transcriptional activator. Binds to the palindromic T site 5'-TTCACACCTAGGTGTGAA-3' DNA sequence, or a half-site, which are present in the regulatory region of several genes. Required for cardiac atrioventricular canal formation. May cooperate with NKX2.5 to negatively modulate expression of NPPA/ANF in the atrioventricular canal. May play a role as a positive regulator of TGFB2 expression, perhaps acting in concert with GATA4 in the developing outflow tract myocardium. Plays a role in limb pattern formation. Acts as a transcriptional repressor of ADAM10 gene expression, perhaps in concert with histone deacetylase HDAC1 as cofactor. Involved in branching morphogenesis in both developing lungs and adult mammary glands, via negative modulation of target genes; acting redundantly with TBX3. Required, together with TBX3, to maintain cell proliferation in the embryonic lung mesenchyme; perhaps acting downstream of SHH, BMP and TGFbeta signaling. Involved in modulating early inner ear development, acting independently of, and also redundantly with TBX3, in different subregions of the developing ear. Acts as a negative regulator of PML function in cellular senescence. Acts as a negative regulator of expression of CDKN1A/p21, IL33 and CCN4; repression of CDKN1A is enhanced in response to UV-induced stress, perhaps as a result of phosphorylation by p38 MAPK. Negatively modulates expression of CDKN2A/p19ARF and CDH1/E-cadherin. Plays a role in induction of the epithelial-mesenchymal transition (EMT). Plays a role in melanocyte proliferation, perhaps via regulation of cyclin CCND1. Involved in melanogenesis, acting via negative modulation of expression of DHICA oxidase/TYRP1 and P protein/OCA2. Involved in regulating retinal pigment epithelium (RPE) cell proliferation, perhaps via negatively modulating transcription of the transcription factor CEBPD. In Mus musculus (Mouse), this protein is T-box transcription factor TBX2 (Tbx2).